The sequence spans 147 residues: D-aminoacyl-tRNA deacylase (147 aa).

Positions 136-137 match the Gly-cisPro motif, important for rejection of L-amino acids motif; sequence GP.

The protein belongs to the DTD family. As to quaternary structure, homodimer.

It is found in the cytoplasm. It catalyses the reaction glycyl-tRNA(Ala) + H2O = tRNA(Ala) + glycine + H(+). The enzyme catalyses a D-aminoacyl-tRNA + H2O = a tRNA + a D-alpha-amino acid + H(+). In terms of biological role, an aminoacyl-tRNA editing enzyme that deacylates mischarged D-aminoacyl-tRNAs. Also deacylates mischarged glycyl-tRNA(Ala), protecting cells against glycine mischarging by AlaRS. Acts via tRNA-based rather than protein-based catalysis; rejects L-amino acids rather than detecting D-amino acids in the active site. By recycling D-aminoacyl-tRNA to D-amino acids and free tRNA molecules, this enzyme counteracts the toxicity associated with the formation of D-aminoacyl-tRNA entities in vivo and helps enforce protein L-homochirality. The polypeptide is D-aminoacyl-tRNA deacylase (Streptococcus pneumoniae (strain Taiwan19F-14)).